Here is a 152-residue protein sequence, read N- to C-terminus: Acidic phospholipase A2 (152 aa).

The first 21 residues, 1-21, serve as a signal peptide directing secretion; the sequence is MNPAHLLVLSAVCVSLLGASS. Residues 22 to 27 constitute a propeptide that is removed on maturation; it reads IPPQPL. 7 cysteine pairs are disulfide-bonded: Cys38–Cys104, Cys54–Cys151, Cys56–Cys72, Cys71–Cys132, Cys78–Cys125, Cys88–Cys118, and Cys111–Cys123. Tyr55, Gly57, and Gly59 together coordinate Ca(2+). Residue His75 is part of the active site. Asp76 is a Ca(2+) binding site. Asp126 is an active-site residue.

The protein belongs to the phospholipase A2 family. Group I subfamily. D49 sub-subfamily. Requires Ca(2+) as cofactor. Expressed by the venom gland.

Its subcellular location is the secreted. The enzyme catalyses a 1,2-diacyl-sn-glycero-3-phosphocholine + H2O = a 1-acyl-sn-glycero-3-phosphocholine + a fatty acid + H(+). In terms of biological role, PLA2 catalyzes the calcium-dependent hydrolysis of the 2-acyl groups in 3-sn-phosphoglycerides. This is Acidic phospholipase A2 from Ophiophagus hannah (King cobra).